The sequence spans 471 residues: ATP synthase subunit beta (471 aa).

153–160 (GGAGVGKT) provides a ligand contact to ATP.

This sequence belongs to the ATPase alpha/beta chains family. As to quaternary structure, F-type ATPases have 2 components, CF(1) - the catalytic core - and CF(0) - the membrane proton channel. CF(1) has five subunits: alpha(3), beta(3), gamma(1), delta(1), epsilon(1). CF(0) has four main subunits: a(1), b(1), b'(1) and c(9-12).

It localises to the cell membrane. The enzyme catalyses ATP + H2O + 4 H(+)(in) = ADP + phosphate + 5 H(+)(out). Produces ATP from ADP in the presence of a proton gradient across the membrane. The catalytic sites are hosted primarily by the beta subunits. This Chloroflexus aurantiacus (strain ATCC 29364 / DSM 637 / Y-400-fl) protein is ATP synthase subunit beta.